The following is a 160-amino-acid chain: ATP synthase subunit b (160 aa).

Residues 15–35 (LAIVIGVLFWFLRGFLGGILE) traverse the membrane as a helical segment.

Belongs to the ATPase B chain family. In terms of assembly, F-type ATPases have 2 components, F(1) - the catalytic core - and F(0) - the membrane proton channel. F(1) has five subunits: alpha(3), beta(3), gamma(1), delta(1), epsilon(1). F(0) has four main subunits: a(1), b(1), b'(1) and c(10-14). The alpha and beta chains form an alternating ring which encloses part of the gamma chain. F(1) is attached to F(0) by a central stalk formed by the gamma and epsilon chains, while a peripheral stalk is formed by the delta, b and b' chains.

The protein localises to the cellular thylakoid membrane. Functionally, f(1)F(0) ATP synthase produces ATP from ADP in the presence of a proton or sodium gradient. F-type ATPases consist of two structural domains, F(1) containing the extramembraneous catalytic core and F(0) containing the membrane proton channel, linked together by a central stalk and a peripheral stalk. During catalysis, ATP synthesis in the catalytic domain of F(1) is coupled via a rotary mechanism of the central stalk subunits to proton translocation. Its function is as follows. Component of the F(0) channel, it forms part of the peripheral stalk, linking F(1) to F(0). This chain is ATP synthase subunit b, found in Synechococcus sp. (strain CC9902).